Reading from the N-terminus, the 122-residue chain is UPF0102 protein Ping_1176 (122 aa).

The protein belongs to the UPF0102 family.

This chain is UPF0102 protein Ping_1176, found in Psychromonas ingrahamii (strain DSM 17664 / CCUG 51855 / 37).